The primary structure comprises 216 residues: Cytochrome c biogenesis ATP-binding export protein CcmA (216 aa).

Positions Leu-2 to Gly-215 constitute an ABC transporter domain. Residue Gly-34 to Thr-41 coordinates ATP.

The protein belongs to the ABC transporter superfamily. CcmA exporter (TC 3.A.1.107) family. The complex is composed of two ATP-binding proteins (CcmA) and two transmembrane proteins (CcmB).

Its subcellular location is the cell inner membrane. It carries out the reaction heme b(in) + ATP + H2O = heme b(out) + ADP + phosphate + H(+). Functionally, part of the ABC transporter complex CcmAB involved in the biogenesis of c-type cytochromes; once thought to export heme, this seems not to be the case, but its exact role is uncertain. Responsible for energy coupling to the transport system. In Photobacterium profundum (strain SS9), this protein is Cytochrome c biogenesis ATP-binding export protein CcmA.